The following is a 652-amino-acid chain: DNA ligase (652 aa).

NAD(+)-binding positions include D29–D33, S78–L79, and E107. K109 (N6-AMP-lysine intermediate) is an active-site residue. NAD(+) is bound by residues R130, E164, K278, and K302. Zn(2+) contacts are provided by C395, C398, C413, and C418. One can recognise a BRCT domain in the interval S577–L652.

The protein belongs to the NAD-dependent DNA ligase family. LigA subfamily. It depends on Mg(2+) as a cofactor. Requires Mn(2+) as cofactor.

The catalysed reaction is NAD(+) + (deoxyribonucleotide)n-3'-hydroxyl + 5'-phospho-(deoxyribonucleotide)m = (deoxyribonucleotide)n+m + AMP + beta-nicotinamide D-nucleotide.. Its function is as follows. DNA ligase that catalyzes the formation of phosphodiester linkages between 5'-phosphoryl and 3'-hydroxyl groups in double-stranded DNA using NAD as a coenzyme and as the energy source for the reaction. It is essential for DNA replication and repair of damaged DNA. This chain is DNA ligase, found in Streptococcus agalactiae serotype V (strain ATCC BAA-611 / 2603 V/R).